A 212-amino-acid chain; its full sequence is Ras-related protein Rab-43 (212 aa).

25–32 (GDASVGKT) is a GTP binding site. The short motif at 47–55 (QGSTIGVDF) is the Effector region element. Serine 49 carries the post-translational modification Phosphoserine. Residue 73–77 (DTAGQ) participates in GTP binding. Threonine 82 bears the Phosphothreonine; by LRRK2 mark. GTP contacts are provided by residues 131 to 134 (NKSD) and 163 to 164 (AK). At serine 193 the chain carries Phosphoserine. 2 S-geranylgeranyl cysteine lipidation sites follow: cysteine 210 and cysteine 212. A Cysteine methyl ester modification is found at cysteine 212.

This sequence belongs to the small GTPase superfamily. Rab family. In terms of assembly, interacts with GDI1, GDI2, CHM and CHML; phosphorylation at Thr-82 disrupts these interactions. Widely expressed in brain, testis, lung, heart, ovary, colon, kidney, uterus and spleen but not in liver.

It is found in the cytoplasmic vesicle. It localises to the phagosome. The protein localises to the phagosome membrane. Its subcellular location is the golgi apparatus. The protein resides in the trans-Golgi network membrane. It is found in the trans-Golgi network. Functionally, the small GTPases Rab are key regulators of intracellular membrane trafficking, from the formation of transport vesicles to their fusion with membranes. Rabs cycle between an inactive GDP-bound form and an active GTP-bound form that is able to recruit to membranes different set of downstream effectors directly responsible for vesicle formation, movement, tethering and fusion. The low intrinsic GTPase activity of RAB43 is activated by USP6NL. Involved in retrograde transport from the endocytic pathway to the Golgi apparatus. Involved in the transport of Shiga toxin from early and recycling endosomes to the trans-Golgi network. Required for the structural integrity of the Golgi complex. Plays a role in the maturation of phagosomes that engulf pathogens, such as S.aureus and M.tuberculosis. The polypeptide is Ras-related protein Rab-43 (RAB43) (Homo sapiens (Human)).